The following is a 343-amino-acid chain: Coiled-coil domain-containing protein 97 (343 aa).

N-acetylmethionine is present on Met1. A disordered region spans residues 1–37 (MEAVATATAAKEPDKGCIEPGPGHWGELSRTPVPSKP). Phosphothreonine is present on Thr47. 3 disordered regions span residues 200 to 220 (ARTPTHQPPKPGSPGRPACPL), 234 to 277 (QQRL…DSEE), and 292 to 343 (RFLD…LDGD). A coiled-coil region spans residues 224-262 (LLQSYEERELQQRLLQQQEEEEACLEEEEEEEDSDEEDQ). The segment covering 241-261 (QEEEEACLEEEEEEEDSDEED) has biased composition (acidic residues). Positions 262-277 (QRSGKDSEAWVPDSEE) are enriched in basic and acidic residues. 2 positions are modified to phosphoserine: Ser275 and Ser337. Acidic residues predominate over residues 324-343 (ERYFDEEEPEDAPSPELDGD).

As to quaternary structure, associates with splicing factor SF3B complex, involved in branch-site recognition.

It is found in the nucleus. Its function is as follows. May play a role pre-mRNA splicing through the association with the splicing factor SF3B complex which is involved in branch-site recognition. The chain is Coiled-coil domain-containing protein 97 (CCDC97) from Homo sapiens (Human).